Reading from the N-terminus, the 265-residue chain is tRNA pseudouridine synthase A (265 aa).

D53 acts as the Nucleophile in catalysis. Residue Y111 participates in substrate binding.

It belongs to the tRNA pseudouridine synthase TruA family. As to quaternary structure, homodimer.

It catalyses the reaction uridine(38/39/40) in tRNA = pseudouridine(38/39/40) in tRNA. In terms of biological role, formation of pseudouridine at positions 38, 39 and 40 in the anticodon stem and loop of transfer RNAs. In Acinetobacter baumannii (strain SDF), this protein is tRNA pseudouridine synthase A.